A 120-amino-acid chain; its full sequence is Small ribosomal subunit protein uS13 (120 aa).

The disordered stretch occupies residues 92–120 (HRKGLPVRGQTTKNNARTRKGKKKTVGSK). Positions 107 to 120 (ARTRKGKKKTVGSK) are enriched in basic residues.

It belongs to the universal ribosomal protein uS13 family. As to quaternary structure, part of the 30S ribosomal subunit. Forms a loose heterodimer with protein S19. Forms two bridges to the 50S subunit in the 70S ribosome.

Functionally, located at the top of the head of the 30S subunit, it contacts several helices of the 16S rRNA. In the 70S ribosome it contacts the 23S rRNA (bridge B1a) and protein L5 of the 50S subunit (bridge B1b), connecting the 2 subunits; these bridges are implicated in subunit movement. Contacts the tRNAs in the A and P-sites. The protein is Small ribosomal subunit protein uS13 of Helicobacter hepaticus (strain ATCC 51449 / 3B1).